We begin with the raw amino-acid sequence, 130 residues long: Small ribosomal subunit protein uS11c (130 aa).

It belongs to the universal ribosomal protein uS11 family. In terms of assembly, part of the 30S ribosomal subunit.

Its subcellular location is the plastid. It localises to the chloroplast. The protein is Small ribosomal subunit protein uS11c of Chlorella vulgaris (Green alga).